The primary structure comprises 366 residues: Ribosomal RNA large subunit methyltransferase M (366 aa).

S-adenosyl-L-methionine-binding positions include Ser188, 221–224, Asp240, Asp260, and Asp277; that span reads CPGG. Lys306 (proton acceptor) is an active-site residue.

Belongs to the class I-like SAM-binding methyltransferase superfamily. RNA methyltransferase RlmE family. RlmM subfamily. Monomer.

The protein resides in the cytoplasm. The enzyme catalyses cytidine(2498) in 23S rRNA + S-adenosyl-L-methionine = 2'-O-methylcytidine(2498) in 23S rRNA + S-adenosyl-L-homocysteine + H(+). In terms of biological role, catalyzes the 2'-O-methylation at nucleotide C2498 in 23S rRNA. The sequence is that of Ribosomal RNA large subunit methyltransferase M from Escherichia coli O139:H28 (strain E24377A / ETEC).